The primary structure comprises 493 residues: Glutamyl-tRNA(Gln) amidotransferase subunit A (493 aa).

Residues Lys-79 and Ser-159 each act as charge relay system in the active site. Ser-183 acts as the Acyl-ester intermediate in catalysis.

Belongs to the amidase family. GatA subfamily. Heterotrimer of A, B and C subunits.

The enzyme catalyses L-glutamyl-tRNA(Gln) + L-glutamine + ATP + H2O = L-glutaminyl-tRNA(Gln) + L-glutamate + ADP + phosphate + H(+). In terms of biological role, allows the formation of correctly charged Gln-tRNA(Gln) through the transamidation of misacylated Glu-tRNA(Gln) in organisms which lack glutaminyl-tRNA synthetase. The reaction takes place in the presence of glutamine and ATP through an activated gamma-phospho-Glu-tRNA(Gln). This chain is Glutamyl-tRNA(Gln) amidotransferase subunit A, found in Rhizobium johnstonii (strain DSM 114642 / LMG 32736 / 3841) (Rhizobium leguminosarum bv. viciae).